The chain runs to 48 residues: MLFCNNNNNNNNNNNNNNNNNNNNNNNNNNNNNNNNNNNSSNNNNFSR.

Residues 1-48 (MLFCNNNNNNNNNNNNNNNNNNNNNNNNNNNNNNNNNNNSSNNNNFSR) form a disordered region.

This is an uncharacterized protein from Dictyostelium discoideum (Social amoeba).